The following is a 515-amino-acid chain: Maturase K (515 aa).

It belongs to the intron maturase 2 family. MatK subfamily.

It localises to the plastid. The protein resides in the chloroplast. Usually encoded in the trnK tRNA gene intron. Probably assists in splicing its own and other chloroplast group II introns. In Pinus uncinata (Mountain pine), this protein is Maturase K.